A 31-amino-acid polypeptide reads, in one-letter code: GIPCAESCVWIPCTVTALLGCSCKDKVCYLN.

Residues 1 to 31 (GIPCAESCVWIPCTVTALLGCSCKDKVCYLN) constitute a cross-link (cyclopeptide (Gly-Asn)). Disulfide bonds link C4–C21, C8–C23, and C13–C28.

Contains 3 disulfide bonds. Post-translationally, this is a cyclic peptide. Expressed in root, seed and nodule but not in flower, stem, shoot, leaf and pod.

Its function is as follows. Probably participates in a plant defense mechanism. The sequence is that of Cyclotide cter-D from Clitoria ternatea (Butterfly pea).